The primary structure comprises 138 residues: Vesicle transport protein GOT1B (138 aa).

Position 1 is an N-acetylmethionine (Met-1). At 1–9 the chain is on the cytoplasmic side; that stretch reads MISLTDTQK. A helical transmembrane segment spans residues 10–30; that stretch reads IGMGLTGFGVFFLFFGMILFF. Residues 31-32 lie on the Lumenal side of the membrane; sequence DK. A helical transmembrane segment spans residues 33–53; the sequence is ALLAIGNVLFVAGLAFVIGLE. The Cytoplasmic portion of the chain corresponds to 54–68; the sequence is RTFRFFFQKHKMKAT. The helical transmembrane segment at 69-89 threads the bilayer; the sequence is GFFLGGVFVVLIGWPLIGMIF. Residue Glu-90 is a topological domain, lumenal. A helical transmembrane segment spans residues 91–109; sequence IYGFFLLFRGFFPVVVGFI. The Cytoplasmic portion of the chain corresponds to 110–138; that stretch reads RRVPVLGSLLNLPGIRSFVDKVGESNNMV.

This sequence belongs to the GOT1 family.

It is found in the golgi apparatus membrane. Functionally, may be involved in fusion of ER-derived transport vesicles with the Golgi complex. This is Vesicle transport protein GOT1B from Bos taurus (Bovine).